A 510-amino-acid chain; its full sequence is NAD(P)H-quinone oxidoreductase subunit 2 A, chloroplastic (510 aa).

Transmembrane regions (helical) follow at residues 24–44 (LLLFHGSFIFPECILIFGLIL), 57–77 (IPWLYFISSTSLVMSITALLF), 99–119 (IFQFLILLCSTLCIPLSVEYI), 124–144 (MAITEFLLFVLTATLGGMFLC), 149–169 (LITIFVAPECFSLCSYLLSGY), 183–203 (YLLMGGASSSILVHGFSWLYG), 229–249 (ISIALIFITVGIGFKLSPAPF), 295–315 (WHLLLEILAILSMILGNLIAI), 323–343 (MLAYSSIGQIGYVIIGIIVGD), 354–374 (YMLFYISMNLGTFACIVLFGL), 395–415 (ALSSALCLLSLGGLPPLAGFF), 418–438 (LYLFWCGWQAGLYFLVSIGLL), and 484–504 (MILCVIASTIPGISMNPIIAI).

It belongs to the complex I subunit 2 family. In terms of assembly, NDH is composed of at least 16 different subunits, 5 of which are encoded in the nucleus.

It is found in the plastid. It localises to the chloroplast thylakoid membrane. The enzyme catalyses a plastoquinone + NADH + (n+1) H(+)(in) = a plastoquinol + NAD(+) + n H(+)(out). It carries out the reaction a plastoquinone + NADPH + (n+1) H(+)(in) = a plastoquinol + NADP(+) + n H(+)(out). Its function is as follows. NDH shuttles electrons from NAD(P)H:plastoquinone, via FMN and iron-sulfur (Fe-S) centers, to quinones in the photosynthetic chain and possibly in a chloroplast respiratory chain. The immediate electron acceptor for the enzyme in this species is believed to be plastoquinone. Couples the redox reaction to proton translocation, and thus conserves the redox energy in a proton gradient. The protein is NAD(P)H-quinone oxidoreductase subunit 2 A, chloroplastic of Piper cenocladum (Ant piper).